The primary structure comprises 203 residues: GTP cyclohydrolase 1 (203 aa).

Positions 87, 90, and 158 each coordinate Zn(2+).

It belongs to the GTP cyclohydrolase I family. Homomer.

It carries out the reaction GTP + H2O = 7,8-dihydroneopterin 3'-triphosphate + formate + H(+). It participates in cofactor biosynthesis; 7,8-dihydroneopterin triphosphate biosynthesis; 7,8-dihydroneopterin triphosphate from GTP: step 1/1. This chain is GTP cyclohydrolase 1, found in Xylella fastidiosa (strain M23).